The primary structure comprises 640 residues: Threonine--tRNA ligase (640 aa).

Positions 1–59 (MKIKVKLPDGKEKEYDRGITPAEIAKELGIKKAIGAVVNGELWDLKRPIENDCELRLVT) constitute a TGS domain. Residues 240–531 (DHRKLGPQLE…LIEHFAGAFP (292 aa)) form a catalytic region. Residues cysteine 332, histidine 383, and histidine 508 each contribute to the Zn(2+) site.

Belongs to the class-II aminoacyl-tRNA synthetase family. Homodimer. Requires Zn(2+) as cofactor.

The protein resides in the cytoplasm. The enzyme catalyses tRNA(Thr) + L-threonine + ATP = L-threonyl-tRNA(Thr) + AMP + diphosphate + H(+). Its function is as follows. Catalyzes the attachment of threonine to tRNA(Thr) in a two-step reaction: L-threonine is first activated by ATP to form Thr-AMP and then transferred to the acceptor end of tRNA(Thr). Also edits incorrectly charged L-seryl-tRNA(Thr). The polypeptide is Threonine--tRNA ligase (Thermotoga maritima (strain ATCC 43589 / DSM 3109 / JCM 10099 / NBRC 100826 / MSB8)).